The primary structure comprises 514 residues: Serine--tRNA ligase, cytoplasmic (514 aa).

Met-1 carries the post-translational modification N-acetylmethionine. The interaction with tRNA stretch occupies residues 9–61 (RVDKGGDPALIRETQEKRFKDPGLVDQLVKADSEWRRCRFRADNLNKLKNLCS). Ser-241 is modified (phosphoserine). Positions 271 and 302 each coordinate L-serine. ATP contacts are provided by residues 302-304 (RQE) and 318-321 (VHQF). Lys-323 bears the N6-acetyllysine mark. Glu-325 contributes to the L-serine binding site. An ATP-binding site is contributed by 391–394 (ELVS). Residue Asn-427 participates in L-serine binding. Positions 472–514 (KPAPIDQEPSKKQKKQHEGSKKKAAARDVTLENRLQNMEVTDA) are disordered. Positions 479 to 502 (EPSKKQKKQHEGSKKKAAARDVTL) are enriched in basic and acidic residues. The Nuclear localization signal signature appears at 482 to 494 (KKQKKQHEGSKKK). Positions 504–514 (NRLQNMEVTDA) are enriched in polar residues.

Belongs to the class-II aminoacyl-tRNA synthetase family. Type-1 seryl-tRNA synthetase subfamily. Homodimer. The tRNA molecule may bind across the dimer. Interacts with SIRT2. Interacts with METTL6; interaction is required for the tRNA N(3)-methylcytidine methyltransferase activity of METTL6.

Its subcellular location is the cytoplasm. It localises to the nucleus. The enzyme catalyses tRNA(Ser) + L-serine + ATP = L-seryl-tRNA(Ser) + AMP + diphosphate + H(+). It carries out the reaction tRNA(Sec) + L-serine + ATP = L-seryl-tRNA(Sec) + AMP + diphosphate + H(+). The protein operates within aminoacyl-tRNA biosynthesis; selenocysteinyl-tRNA(Sec) biosynthesis; L-seryl-tRNA(Sec) from L-serine and tRNA(Sec): step 1/1. Its function is as follows. Catalyzes the attachment of serine to tRNA(Ser) in a two-step reaction: serine is first activated by ATP to form Ser-AMP and then transferred to the acceptor end of tRNA(Ser). Is probably also able to aminoacylate tRNA(Sec) with serine, to form the misacylated tRNA L-seryl-tRNA(Sec), which will be further converted into selenocysteinyl-tRNA(Sec). In the nucleus, binds to the VEGFA core promoter and prevents MYC binding and transcriptional activation by MYC. Recruits SIRT2 to the VEGFA promoter, promoting deacetylation of histone H4 at 'Lys-16' (H4K16). Thereby, inhibits the production of VEGFA and sprouting angiogenesis mediated by VEGFA. This chain is Serine--tRNA ligase, cytoplasmic (SARS1), found in Oryctolagus cuniculus (Rabbit).